Here is a 72-residue protein sequence, read N- to C-terminus: KRAVQSEKRRQHNASRRSMMRTYIKKVYAAVASGDKEAAQKAFNDMQPIVDRQATKGLIHKNKAARHKANLQ.

Belongs to the bacterial ribosomal protein bS20 family.

Binds directly to 16S ribosomal RNA. In Proteus mirabilis, this protein is Small ribosomal subunit protein bS20 (rpsT).